A 629-amino-acid polypeptide reads, in one-letter code: MFYQDPFDVIIIGGGHAGTEAAMTAARMGQQTLLLTHNIDTLGQMSCNPAIGGIGKGHLVKEVDALGGLMAKAIDQAGIQFRILNASKGPAVRATRAQADRVLYRQAVRTALENQPNLMIFQQAVEDLIVENDRVVGAVTQMGLKFRAKAVVLTVGTFLDGKIHIGLDNYSGGRAGDPPSIPLSRRLRELPLRVSRLKTGTPPRIDARTIDFSVLAQQHGDNPMPVFSFMGNASQHPQQVPCYITHTNEKTHDVIRNNLDRSPMYAGVIEGIGPRYCPSIEDKVMRFADRNQHQIFLEPEGLTSNEIYPNGISTSLPFDVQMQIVRSMQGMENAKIVRPGYAIEYDFFDPRDLKPTLESKFIHGLFFAGQINGTTGYEEAAAQGLLAGLNAARLSADKEGWAPARSQAYLGVLVDDLCTLGTKEPYRMFTSRAEYRLMLREDNADLRLTEMGRELGLVDDERWARFNEKLENIERERQRLKSTWVTPSAESADEVNAHLTTPLSREASGEDLLRRPEMTYAQLTSLAAFAPALEDEQAAEQVEIQVKYEGYIARQQDEIEKQLRNENTLLPATLDYRQVSGLSNEVIAKLNDHKPASIGQASRISGVTPAAISILLVWLKKQGMLRRSA.

FAD contacts are provided by residues Gly-13–Gly-18, Val-125, and Ser-180. Gly-273–Phe-287 lines the NAD(+) pocket. Residue Gln-370 participates in FAD binding.

This sequence belongs to the MnmG family. In terms of assembly, homodimer. Heterotetramer of two MnmE and two MnmG subunits. FAD serves as cofactor.

The protein localises to the cytoplasm. NAD-binding protein involved in the addition of a carboxymethylaminomethyl (cmnm) group at the wobble position (U34) of certain tRNAs, forming tRNA-cmnm(5)s(2)U34. This chain is tRNA uridine 5-carboxymethylaminomethyl modification enzyme MnmG, found in Salmonella paratyphi C (strain RKS4594).